A 227-amino-acid polypeptide reads, in one-letter code: ATP synthase F(0) complex subunit a (227 aa).

Transmembrane regions (helical) follow at residues 9–29, 69–89, 98–118, 132–152, 165–185, and 190–210; these read FASP…LPWV, WALL…LGLL, QLSL…IIGM, EGTP…SLFI, LTAG…LMPM, and AILT…VAMI.

This sequence belongs to the ATPase A chain family. In terms of assembly, component of the ATP synthase complex composed at least of ATP5F1A/subunit alpha, ATP5F1B/subunit beta, ATP5MC1/subunit c (homooctomer), MT-ATP6/subunit a, MT-ATP8/subunit 8, ATP5ME/subunit e, ATP5MF/subunit f, ATP5MG/subunit g, ATP5MK/subunit k, ATP5MJ/subunit j, ATP5F1C/subunit gamma, ATP5F1D/subunit delta, ATP5F1E/subunit epsilon, ATP5PF/subunit F6, ATP5PB/subunit b, ATP5PD/subunit d, ATP5PO/subunit OSCP. ATP synthase complex consists of a soluble F(1) head domain (subunits alpha(3) and beta(3)) - the catalytic core - and a membrane F(0) domain - the membrane proton channel (subunits c, a, 8, e, f, g, k and j). These two domains are linked by a central stalk (subunits gamma, delta, and epsilon) rotating inside the F1 region and a stationary peripheral stalk (subunits F6, b, d, and OSCP). Interacts with DNAJC30; interaction is direct.

It is found in the mitochondrion inner membrane. The enzyme catalyses H(+)(in) = H(+)(out). Functionally, subunit a, of the mitochondrial membrane ATP synthase complex (F(1)F(0) ATP synthase or Complex V) that produces ATP from ADP in the presence of a proton gradient across the membrane which is generated by electron transport complexes of the respiratory chain. ATP synthase complex consist of a soluble F(1) head domain - the catalytic core - and a membrane F(1) domain - the membrane proton channel. These two domains are linked by a central stalk rotating inside the F(1) region and a stationary peripheral stalk. During catalysis, ATP synthesis in the catalytic domain of F(1) is coupled via a rotary mechanism of the central stalk subunits to proton translocation. With the subunit c (ATP5MC1), forms the proton-conducting channel in the F(0) domain, that contains two crucial half-channels (inlet and outlet) that facilitate proton movement from the mitochondrial intermembrane space (IMS) into the matrix. Protons are taken up via the inlet half-channel and released through the outlet half-channel, following a Grotthuss mechanism. This Carassius auratus (Goldfish) protein is ATP synthase F(0) complex subunit a.